Here is a 139-residue protein sequence, read N- to C-terminus: Large ribosomal subunit protein uL16 (139 aa).

The protein belongs to the universal ribosomal protein uL16 family. As to quaternary structure, part of the 50S ribosomal subunit.

Functionally, binds 23S rRNA and is also seen to make contacts with the A and possibly P site tRNAs. The polypeptide is Large ribosomal subunit protein uL16 (Microcystis aeruginosa (strain NIES-843 / IAM M-2473)).